The primary structure comprises 351 residues: Nicotinate-nucleotide--dimethylbenzimidazole phosphoribosyltransferase (351 aa).

Glu-315 functions as the Proton acceptor in the catalytic mechanism.

The protein belongs to the CobT family.

The catalysed reaction is 5,6-dimethylbenzimidazole + nicotinate beta-D-ribonucleotide = alpha-ribazole 5'-phosphate + nicotinate + H(+). The protein operates within nucleoside biosynthesis; alpha-ribazole biosynthesis; alpha-ribazole from 5,6-dimethylbenzimidazole: step 1/2. Its function is as follows. Catalyzes the synthesis of alpha-ribazole-5'-phosphate from nicotinate mononucleotide (NAMN) and 5,6-dimethylbenzimidazole (DMB). In Acetivibrio thermocellus (strain ATCC 27405 / DSM 1237 / JCM 9322 / NBRC 103400 / NCIMB 10682 / NRRL B-4536 / VPI 7372) (Clostridium thermocellum), this protein is Nicotinate-nucleotide--dimethylbenzimidazole phosphoribosyltransferase.